A 61-amino-acid polypeptide reads, in one-letter code: Small ribosomal subunit protein uS14 (61 aa).

Residues cysteine 24, cysteine 27, cysteine 40, and cysteine 43 each contribute to the Zn(2+) site.

This sequence belongs to the universal ribosomal protein uS14 family. Zinc-binding uS14 subfamily. In terms of assembly, part of the 30S ribosomal subunit. Contacts proteins S3 and S10. It depends on Zn(2+) as a cofactor.

In terms of biological role, binds 16S rRNA, required for the assembly of 30S particles and may also be responsible for determining the conformation of the 16S rRNA at the A site. This chain is Small ribosomal subunit protein uS14, found in Treponema denticola (strain ATCC 35405 / DSM 14222 / CIP 103919 / JCM 8153 / KCTC 15104).